The sequence spans 289 residues: Shikimate dehydrogenase (NADP(+)) (289 aa).

Residues 19–21 and T66 each bind shikimate; that span reads SLS. K70 (proton acceptor) is an active-site residue. N91 and D106 together coordinate shikimate. Residues 131–135 and L229 each bind NADP(+); that span reads GNGGA. Y231 is a binding site for shikimate. NADP(+) is bound at residue G252.

It belongs to the shikimate dehydrogenase family. Homodimer.

It catalyses the reaction shikimate + NADP(+) = 3-dehydroshikimate + NADPH + H(+). Its pathway is metabolic intermediate biosynthesis; chorismate biosynthesis; chorismate from D-erythrose 4-phosphate and phosphoenolpyruvate: step 4/7. In terms of biological role, involved in the biosynthesis of the chorismate, which leads to the biosynthesis of aromatic amino acids. Catalyzes the reversible NADPH linked reduction of 3-dehydroshikimate (DHSA) to yield shikimate (SA). The polypeptide is Shikimate dehydrogenase (NADP(+)) (Trichormus variabilis (strain ATCC 29413 / PCC 7937) (Anabaena variabilis)).